The primary structure comprises 137 residues: Phospholipase A2 group V (137 aa).

The first 20 residues, 1 to 20, serve as a signal peptide directing secretion; sequence MKGLLTLAWFLACSVPAVPG. 6 disulfides stabilise this stretch: Cys46–Cys137, Cys48–Cys64, Cys63–Cys117, Cys70–Cys110, Cys79–Cys103, and Cys97–Cys108. Residues Tyr47, Gly49, and Gly51 each coordinate Ca(2+). His67 is an active-site residue. Asp68 serves as a coordination point for Ca(2+). The active site involves Asp111.

It belongs to the phospholipase A2 family. Ca(2+) is required as a cofactor. This enzyme lacks one of the seven disulfide bonds found in similar PA2 proteins. In terms of tissue distribution, expressed in peritoneal macrophages (at protein level). Expressed in heart, skeletal muscle and white adipose tissue.

Its subcellular location is the secreted. It is found in the cell membrane. The protein localises to the cytoplasmic vesicle. It localises to the phagosome. The protein resides in the recycling endosome. Its subcellular location is the golgi apparatus. It is found in the cis-Golgi network. The protein localises to the trans-Golgi network. It catalyses the reaction a 1,2-diacyl-sn-glycero-3-phosphocholine + H2O = a 1-acyl-sn-glycero-3-phosphocholine + a fatty acid + H(+). The enzyme catalyses 1-hexadecanoyl-2-(9Z-octadecenoyl)-sn-glycero-3-phosphocholine + H2O = 1-hexadecanoyl-sn-glycero-3-phosphocholine + (9Z)-octadecenoate + H(+). It carries out the reaction 1-hexadecanoyl-2-(5Z,8Z,11Z,14Z-eicosatetraenoyl)-sn-glycero-3-phosphocholine + H2O = 1-hexadecanoyl-sn-glycero-3-phosphocholine + (5Z,8Z,11Z,14Z)-eicosatetraenoate + H(+). The catalysed reaction is 1-hexadecanoyl-2-(9Z,12Z-octadecadienoyl)-sn-glycero-3-phosphoethanolamine + H2O = 1-hexadecanoyl-sn-glycero-3-phosphoethanolamine + (9Z,12Z)-octadecadienoate + H(+). It catalyses the reaction 1-hexadecanoyl-2-(5Z,8Z,11Z,14Z-eicosatetraenoyl)-sn-glycero-3-phosphoethanolamine + H2O = 1-hexadecanoyl-sn-glycero-3-phosphoethanolamine + (5Z,8Z,11Z,14Z)-eicosatetraenoate + H(+). The enzyme catalyses 1-octadecanoyl-2-(5Z,8Z,11Z,14Z-eicosatetraenoyl)-sn-glycero-3-phospho-(1D-myo-inositol) + H2O = 1-octadecanoyl-sn-glycero-3-phospho-(1D-myo-inositol) + (5Z,8Z,11Z,14Z)-eicosatetraenoate + H(+). It carries out the reaction 1-hexadecanoyl-2-(9Z-octadecenoyl)-sn-glycero-3-phosphoglycerol + H2O = 1-hexadecanoyl-sn-glycero-3-phosphoglycerol + (9Z)-octadecenoate + H(+). The catalysed reaction is N-hexadecanoyl-1,2-di-(9Z-octadecenoyl)-sn-glycero-3-phosphoethanolamine + H2O = N-hexadecanoyl-1-(9Z-octadecenoyl)-sn-glycero-3-phosphoethanolamine + (9Z)-octadecenoate + H(+). It catalyses the reaction 1'-[1,2-di-(9Z-octadecenoyl)-sn-glycero-3-phospho]-3'-[1-(9Z-octadecenoyl)-sn-glycero-3-phospho]-glycerol + H2O = 1',3'-bis-[1-(9Z-octadecenoyl)-sn-glycero-3-phospho]-glycerol + (9Z)-octadecenoate + H(+). The enzyme catalyses 1',3'-bis[1,2-di-(9Z-octadecenoyl)-sn-glycero-3-phospho]-glycerol + H2O = 1'-[1,2-di-(9Z-octadecenoyl)-sn-glycero-3-phospho]-3'-[1-(9Z-octadecenoyl)-sn-glycero-3-phospho]-glycerol + (9Z)-octadecenoate + H(+). It participates in lipid metabolism; phospholipid metabolism. The protein operates within lipid metabolism; leukotriene B4 biosynthesis. It functions in the pathway lipid metabolism; leukotriene C4 biosynthesis. Its function is as follows. Secretory calcium-dependent phospholipase A2 that primarily targets extracellular phospholipids. Hydrolyzes the ester bond of the fatty acyl group attached at sn-2 position of phospholipids (phospholipase A2 activity), preferentially releasing fatty acyl groups with a low degree of unsaturation such as oleoyl (C18:1) and linoleoyl (C18:2) groups. Hydrolyzes low-density lipoprotein (LDL) phospholipids releasing unsaturated fatty acids that drive macrophage polarization toward an M2 phenotype. May act in an autocrine and paracrine manner. Contributes to lipid remodeling of cellular membranes at different subcellular locations and generation of lipid mediators involved in pathogen clearance. Cleaves sn-2 fatty acyl chains of cardiolipin, a major component of the inner membrane of mitochondria and bacterial membranes. Promotes phagocytosis of bacteria in macrophages through production of lysophosphatidylethanolamines. Displays bactericidal activity against Gram-positive bacteria by directly hydrolyzing the phospholipids of the bacterial membrane. Promotes phagocytosis and killing of ingested fungi likely through controlling phagosome-lysosome fusion and phagosome maturation. Plays a role in biosynthesis of cysteinyl leukotrienes (CysLTs) in myeloid cells. In eosinophils, triggers perinuclear arachidonate release and LTC4 synthesis in a PLA2G4A-independent way. In neutrophils, amplifies CysLTs biosynthesis initiated by PLA2G4A. Promotes immune complex clearance in macrophages via stimulating synthesis of CysLTs, which act through CYSLTR1 to trigger phagocytosis. May regulate antigen processing in antigen-presenting cells. In pulmonary macrophages regulates IL33 production required for activation of group 2 innate lymphoid cells. May play a role in the biosynthesis of N-acyl ethanolamines that regulate energy metabolism. Hydrolyzes N-acyl phosphatidylethanolamines to N-acyl lysophosphatidylethanolamines, which are further cleaved by a lysophospholipase D to release N-acyl ethanolamines. This Mus musculus (Mouse) protein is Phospholipase A2 group V (Pla2g5).